The primary structure comprises 696 residues: Caprolactamase subunit alpha (696 aa).

The protein belongs to the HyuA family. As to quaternary structure, the caprolactamase is a heterotetramer composed of two alpha subunits (CapA) and two beta subunits (CapB).

Activity is dependent on the presence of ATP and bicarbonate. The requirement for bicarbonate may be related to allosteric activation through conformational effects, but it is also conceivable that carboxyphosphate is formed and acts as a mediator in caprolactam activation, forming carboxy- or phospholactim. Component of a caprolactamase involved in the degradation of caprolactam, an industrial compound mainly used in the production of Nylon 6. Catalyzes the ATP-dependent hydrolysis of the caprolactam ring to form 6-aminocaproic acid (6-ACA). The alpha subunit is responsible for ATP-dependent substrate phosphorylation. The enzyme cannot use 5-oxoproline. The sequence is that of Caprolactamase subunit alpha from Pseudomonas jessenii.